Consider the following 321-residue polypeptide: MAAAEAGGDDARCVRLSAERAQALLADVDTLLFDCDGVLWRGETAVPGAPEALRALRARGKRLGFITNNSSKTRAAYAEKLRRLGFGGPAGPGASLEVFGTAYCTALYLRQRLAGAPAPKAYVLGSPALAAELEAVGVASVGVGPEPLQGEGPGDWLHAPLEPDVRAVVVGFDPHFSYMKLTKALRYLQQPGCLLVGTNMDNRLPLENGRFIAGTGCLVRAVEMAAQRQADIIGKPSRFIFDCVSQEYGINPERTVMVGDRLDTDILLGATCGLKTILTLTGVSTLGDVKNNQESDCVSKKKMVPDFYVDSIADLLPALQG.

Residue Asp34 is the Nucleophile of the active site. The Mg(2+) site is built by Asp34, Asp36, and Asp260. Asp36 acts as the Proton donor in catalysis.

It belongs to the HAD-like hydrolase superfamily. CbbY/CbbZ/Gph/YieH family. Homodimer. The cofactor is Mg(2+). Detected in all tissues including red cells, lymphocytes and cultured fibroblasts (at protein level). The highest activities occur in skeletal muscle and cardiac muscle.

It carries out the reaction O-phospho-L-tyrosyl-[protein] + H2O = L-tyrosyl-[protein] + phosphate. The enzyme catalyses sn-glycerol 1-phosphate + H2O = glycerol + phosphate. The catalysed reaction is sn-glycerol 3-phosphate + H2O = glycerol + phosphate. Glycerol-3-phosphate phosphatase hydrolyzing glycerol-3-phosphate into glycerol. Thereby, regulates the cellular levels of glycerol-3-phosphate a metabolic intermediate of glucose, lipid and energy metabolism. Was also shown to have a 2-phosphoglycolate phosphatase activity and a tyrosine-protein phosphatase activity. However, their physiological relevance is unclear. In vitro, also has a phosphatase activity toward ADP, ATP, GDP and GTP. The polypeptide is Glycerol-3-phosphate phosphatase (Homo sapiens (Human)).